Reading from the N-terminus, the 453-residue chain is Cytochrome P450 monooxygenase CYP2 (453 aa).

The helical transmembrane segment at 13 to 29 (MVITMLHGSSTYSLLAS) threads the bilayer. The N-linked (GlcNAc...) asparagine glycan is linked to N85. Residue C397 coordinates heme.

The protein belongs to the cytochrome P450 family. It depends on heme as a cofactor.

Its subcellular location is the membrane. It participates in secondary metabolite biosynthesis. In terms of biological role, cytochrome P450 monooxygenase; part of the gene cluster that mediates the biosynthesis of a tyrosine-derived cytochalasan acting as a fungal signal recognized by resistant rice plants and leads to avirulence in Pi33 resistant rice cultivars. The first step in the pathway is catalyzed by the hybrid PKS-NRPS ACE1, assisted by the enoyl reductase RAP1, that are responsible for fusion of the tyrosine precursor and the polyketide backbone. The polyketide synthase module (PKS) of ACE1 is responsible for the synthesis of the polyketide backbone and the downstream nonribosomal peptide synthetase (NRPS) amidates the carboxyl end of the polyketide with the tyrosine precursor. Because ACE1 lacks a designated enoylreductase (ER) domain, the required activity is provided the enoyl reductase RAP1. Reduction by the hydrolyase ORFZ, followed by dehydration and intra-molecular Diels-Alder cyclization by the Diels-Alderase ORF3 then yield the required isoindolone-fused macrocycle. A number of oxidative steps catalyzed by the tailoring enzymes identified within the cluster, including cytochrome P450 monooxygenases CYP1 to CYP4, the FAD-linked oxidoreductase OXR2 and the short-chain dehydrogenase/reductase OXR1, are further required to afford the final cytochalasans that confer avirulence and which have still to be identified. The monooxygenase CYP1 has been shown to be a site-selective C-18 hydroxylase whereas the function of CYP3 is the site-selective epoxidation of the C-6/C-7 olefin that is present in some intermediate compounds. Finally, SYN2 and RAP2 are not required for avirulence in Pi33 resistant rice cultivars. This chain is Cytochrome P450 monooxygenase CYP2, found in Pyricularia oryzae (strain 70-15 / ATCC MYA-4617 / FGSC 8958) (Rice blast fungus).